Reading from the N-terminus, the 856-residue chain is Structure-specific endonuclease subunit SLX4 (856 aa).

Residues 1–19 (MDNAAIASQSNTPPSNGRS) show a composition bias toward polar residues. Disordered stretches follow at residues 1–24 (MDNA…ARFV), 38–65 (VIEP…SHKI), 88–121 (VDSP…HKMA), 139–202 (KTRK…DNEL), 296–326 (GIQT…KKPQ), 362–392 (KKMG…GNGP), 621–640 (SKSS…SQGD), 668–689 (RLAK…NEGP), and 715–742 (DSVG…QDCD). The span at 51 to 60 (STLLTSLSKS) shows a compositional bias: low complexity. Over residues 139–152 (KTRKKKAATAKRTR) the composition is skewed to basic residues. Positions 296–309 (GIQTPTESRPATND) are enriched in polar residues. Over residues 673–686 (SVKSQEPKSFSLSN) the composition is skewed to polar residues.

It belongs to the SLX4 family. Forms a heterodimer with SLX1. In terms of processing, phosphorylated in response to DNA damage.

It localises to the nucleus. Functionally, regulatory subunit of the SLX1-SLX4 structure-specific endonuclease that resolves DNA secondary structures generated during DNA repair and recombination. Has endonuclease activity towards branched DNA substrates, introducing single-strand cuts in duplex DNA close to junctions with ss-DNA. The protein is Structure-specific endonuclease subunit SLX4 of Blastomyces gilchristii (strain SLH14081) (Blastomyces dermatitidis).